The chain runs to 236 residues: Small ribosomal subunit protein mS41 (236 aa).

Belongs to the mitochondrion-specific ribosomal protein mS41 family. As to quaternary structure, component of the mitochondrial small ribosomal subunit (mt-SSU). Mature N.crassa 74S mitochondrial ribosomes consist of a small (37S) and a large (54S) subunit. The 37S small subunit contains a 16S ribosomal RNA (16S mt-rRNA) and 32 different proteins. The 54S large subunit contains a 23S rRNA (23S mt-rRNA) and 42 different proteins.

The protein localises to the mitochondrion. Its function is as follows. Component of the mitochondrial ribosome (mitoribosome), a dedicated translation machinery responsible for the synthesis of mitochondrial genome-encoded proteins, including at least some of the essential transmembrane subunits of the mitochondrial respiratory chain. The mitoribosomes are attached to the mitochondrial inner membrane and translation products are cotranslationally integrated into the membrane. The sequence is that of Small ribosomal subunit protein mS41 (fyv4) from Neurospora crassa (strain ATCC 24698 / 74-OR23-1A / CBS 708.71 / DSM 1257 / FGSC 987).